The sequence spans 320 residues: RNA-binding protein Musashi homolog 1 (320 aa).

A compositionally biased stretch (low complexity) spans 1-14 (MTTTVSTGATAVAT). Residues 1 to 48 (MTTTVSTGATAVATLRETSPPVDGHEEARLNADSDDGSHGSQDPGKMF) form a disordered region. T18 is subject to Phosphothreonine. Phosphoserine is present on residues S19 and S34. The span at 23 to 38 (DGHEEARLNADSDDGS) shows a compositional bias: basic and acidic residues. 2 RRM domains span residues 45–124 (GKMF…FPKR) and 134–211 (KKVF…KAQP). 2 required for binding to target mRNAs regions span residues 88–93 (FGFITF) and 177–182 (FGFVTF).

The protein belongs to the Musashi family. Expressed in the gut and in AVA, AFD, RMD, RMED, RMEV, RMER and RMEL neurons (at protein level). In the tail expressed in neurons and all the ray sensilla. Expressed in male specific C1-C4 neurons.

Its subcellular location is the cytoplasm. It is found in the perikaryon. RNA binding protein that regulates the expression of target mRNAs at the translation level. Binds RNA containing the 5'-[GA]U(1-3)AGU-3' motif located in the 3' UTR of the target mRNA. Binds to the mRNA of three Arp2/3 complex components arx-1, arx-2 and arx-3 and negatively regulates their translation during association learning. Plays a role in time-dependent memory loss and the retention of conditioned behavior over time, probably through negative regulation of the Arp2/3 actin cytoskeleton branching complex and regulation of synapse size. Required for two aspects of male mating behavior: turning around the hermaphrodite head or tail and vulva location. This Caenorhabditis elegans protein is RNA-binding protein Musashi homolog 1.